A 163-amino-acid polypeptide reads, in one-letter code: Neurotrophin-3 (163 aa).

The signal sequence occupies residues 1–3; the sequence is IQS. A propeptide spanning residues 4–119 is cleaved from the precursor; sequence TSMDQGILTE…VLNRTSRRKR (116 aa). A glycan (N-linked (GlcNAc...) asparagine) is linked at N112. Residues 113–133 form a disordered region; sequence RTSRRKREGKSHRGEYSVCDS. A compositionally biased stretch (basic and acidic residues) spans 123–133; that stretch reads SHRGEYSVCDS.

It belongs to the NGF-beta family.

The protein localises to the secreted. Functionally, seems to promote the survival of visceral and proprioceptive sensory neurons. This is Neurotrophin-3 (NTF3) from Charina bottae (Northern rubber boa).